Here is a 365-residue protein sequence, read N- to C-terminus: Putative F-box/kelch-repeat protein At4g39290 (365 aa).

In terms of domain architecture, F-box spans 10–58 (QMTFSMLPDDLVLNCLARVSKVYYPSLSFVSKKFRSLIASTELQELRSF). Kelch repeat units follow at residues 118–165 (DIYA…CVLN) and 167–213 (KIYV…KIVG).

The protein is Putative F-box/kelch-repeat protein At4g39290 of Arabidopsis thaliana (Mouse-ear cress).